The chain runs to 804 residues: MAIDSYCIPNFSQTIDNRTIVNIFQSCKYRSQLSVCFLNDKSAADKFSNSMRQGSGTITFIIHAEDGEISEQLHSTFRSVSTMLLCGMQLFVFIVAPRNVISSETGKAITWAFRGSFIELRDHGRGEQALHDILEQFYRLSPLVNVPKMGMAYYGPTSFAELLSLSSKNKTSWRYVIDYSMFTRSALVGFASHMMDECSFANKQINVIGYNPPYVWAGLRHGVTTRFTEMSTPDPEGYGPIKLILPRLTGNVLLKKVKYVQHDPQKKLLCDDSVMFALSRNILYIGVYPATHLLDYNLKGWRMVAVDPKINAAWAETLKQRTSIDLVPISAKFEFNAQSTRDIVLKYFSGVPFSIIDDSWVEGTEDYEKFQELKQSYFEQLVMNGSTSKLRVSMISMKWNRTKDVKCRRLLALLPQPYGGSLRELRAYFHVNGAAEVNIKKSEVNSYMDKFTSLSISEQIGSQKFMHMLITNYGDALKLKTGRDKAIIASYSLSNAINKKERVLKFLSDAAKSETLIIFGAPNLNRVKFMIKSGIVLGSDVTISNDLITFKNASGKVWKDYGYTQSELIKSSMIEITIEQMLCISSSSYNGVGYFANSIYNDMFSWYVPEWLFEKYFSIQDIRLSPVALVKCFTTSIRNLCYVPHLTYYALRGSFVEKVLITNNVLNSSYLITGTSHSTFKVLSNFEVPSPAGVLKFKAGDDVNISGHLLSLVIAAHFVASPTLLWATHMKRMTTPVNLPKNLDKLLFFDNKIKNGMLEKWHSREEVVLAAMIVENYVAHILNGRHSIEIIQEITQVIYEKFNA.

The protein belongs to the phytoreovirus protein P5 family.

It is found in the virion. The protein resides in the host cytoplasm. It catalyses the reaction a 5'-end diphospho-ribonucleoside in mRNA + GTP + H(+) = a 5'-end (5'-triphosphoguanosine)-ribonucleoside in mRNA + diphosphate. It functions in the pathway mRNA processing; mRNA capping. In terms of biological role, enzyme involved in mRNA capping (Potential). Binds to GTP and might have guanylyltransferase activity. Together with the RNA-directed RNA polymerase P1 and protein P7, forms an transcriptional complex positioned near the channels situated at each of the five-fold vertices of the core. The sequence is that of Putative mRNA-capping enzyme P5 from Catharanthus roseus (Madagascar periwinkle).